Consider the following 260-residue polypeptide: MVLIRVLANLLILQLSYAQKSSKLVIGGDECNINEHRFLVALYTSRTLFCGGTLINQEWVLTAAHCNMEDIQIKLGMHSKKVPNEDEQKRVPKEKFFCLSSKNYTLWDKDIMLIRLDSPVKNSAHIAPLSLPSSPPSVGSDCRTMGWGRISSTKETYPDVPHCVNINLLEYEMCRAPYPEFELPATSRTLCAGILEGGKDTCVGDSGGPLICNGQSQGIASWGDDPCAQPHRPAAYTKVFDHLDWIENIIAGNTDASCPP.

A signal peptide spans methionine 1–alanine 18. A propeptide spanning residues glutamine 19–leucine 24 is cleaved from the precursor. Residues valine 25 to alanine 251 form the Peptidase S1 domain. Disulfide bonds link cysteine 31/cysteine 163, cysteine 50/cysteine 66, cysteine 98/cysteine 258, cysteine 142/cysteine 212, cysteine 174/cysteine 191, and cysteine 202/cysteine 227. The active-site Charge relay system is the histidine 65. Asparagine 103 carries N-linked (GlcNAc...) asparagine glycosylation. Aspartate 110 functions as the Charge relay system in the catalytic mechanism. Catalysis depends on serine 206, which acts as the Charge relay system.

It belongs to the peptidase S1 family. Snake venom subfamily. In terms of assembly, monomer. In terms of tissue distribution, expressed by the venom gland.

It is found in the secreted. Its function is as follows. Snake venom serine protease that may act in the hemostasis system of the prey. The sequence is that of Snake venom serine protease pallabin (JZTHR5) from Gloydius halys (Chinese water mocassin).